Consider the following 120-residue polypeptide: Large ribosomal subunit protein uL18 (120 aa).

Belongs to the universal ribosomal protein uL18 family. Part of the 50S ribosomal subunit; part of the 5S rRNA/L5/L18/L25 subcomplex. Contacts the 5S and 23S rRNAs.

Its function is as follows. This is one of the proteins that bind and probably mediate the attachment of the 5S RNA into the large ribosomal subunit, where it forms part of the central protuberance. This is Large ribosomal subunit protein uL18 from Geobacillus kaustophilus (strain HTA426).